Consider the following 194-residue polypeptide: Imidazoleglycerol-phosphate dehydratase (194 aa).

The protein belongs to the imidazoleglycerol-phosphate dehydratase family.

Its subcellular location is the cytoplasm. The catalysed reaction is D-erythro-1-(imidazol-4-yl)glycerol 3-phosphate = 3-(imidazol-4-yl)-2-oxopropyl phosphate + H2O. Its pathway is amino-acid biosynthesis; L-histidine biosynthesis; L-histidine from 5-phospho-alpha-D-ribose 1-diphosphate: step 6/9. The protein is Imidazoleglycerol-phosphate dehydratase of Limosilactobacillus fermentum (strain NBRC 3956 / LMG 18251) (Lactobacillus fermentum).